The chain runs to 141 residues: MAKKLAGTMKLQVPAGQANPSPPVGPALGQRGINIMEFCKAFNAKTQDMEPGAPCPTVITYYQDKSFTMEIKTPPAAYYLKKAAKVKSGASTPSRQTVGTVTVAQVREIAEAKMRDLNANDIEGAMKIVLGSARSMGIEVK.

It belongs to the universal ribosomal protein uL11 family. As to quaternary structure, part of the ribosomal stalk of the 50S ribosomal subunit. Interacts with L10 and the large rRNA to form the base of the stalk. L10 forms an elongated spine to which L12 dimers bind in a sequential fashion forming a multimeric L10(L12)X complex. One or more lysine residues are methylated.

Functionally, forms part of the ribosomal stalk which helps the ribosome interact with GTP-bound translation factors. This Dinoroseobacter shibae (strain DSM 16493 / NCIMB 14021 / DFL 12) protein is Large ribosomal subunit protein uL11.